Reading from the N-terminus, the 209-residue chain is MKTSEWIDISQPLNNDIATWPGDTPFSYEVSWSKEESGSVNVGKLTMSIHTGTHIDAPFHFDNEGKKVIDLDVQVYVGPARIIDVSNLESIGKKELENFHLEGVERLLLRTSSHGKANEFPDVIPHLRADIAPFLSEKGIRLIGVDVPSVDPLDDKELAAHHQLFKHGIHILENVVLDHVADGDYELIALPLALSDADGSPVRAVIRPI.

Residue W20 participates in substrate binding. H50, H54, and D56 together coordinate Zn(2+). The active-site Proton donor/acceptor is the H60. Zn(2+)-binding residues include H161 and E173.

Belongs to the Cyclase 1 superfamily. KynB family. As to quaternary structure, homodimer. The cofactor is Zn(2+).

The catalysed reaction is N-formyl-L-kynurenine + H2O = L-kynurenine + formate + H(+). It functions in the pathway amino-acid degradation; L-tryptophan degradation via kynurenine pathway; L-kynurenine from L-tryptophan: step 2/2. In terms of biological role, catalyzes the hydrolysis of N-formyl-L-kynurenine to L-kynurenine, the second step in the kynurenine pathway of tryptophan degradation. In Bacillus cereus (strain ZK / E33L), this protein is Kynurenine formamidase.